The primary structure comprises 359 residues: MAFNGTVPSFCMDFTVYKVTISVILIILILVTVAGNVVVCLAVGLNRRLRSLTNCFIVSLAVTDLLLGLLVLPFSAIYQLSCKWSFSKVFCNIYTSLDVMLCTASILNLFMISLDRYCAVTDPLRYPVLITPARVAISLVFIWVISITLSFLSIHLGWNSRNETSKDNDTIVKCKVQVNEVYGLVDGLVTFYLPLLIMCITYFRIFKIAREQARRINHIGSWKAATIREHKATVTLAAVMGAFIICWFPYFTVFVYRGLKGDDAVNEVFEDVVLWLGYANSALNPILYAALNRDFRTAYHQLFCCRLASHNSHETSLRLNNSQLNRSQCQEPRWQEDKPLNLQVWSGTEVTAPQGATNR.

The Extracellular portion of the chain corresponds to 1-22 (MAFNGTVPSFCMDFTVYKVTIS). Asn-4 carries N-linked (GlcNAc...) asparagine glycosylation. Residues 23–44 (VILIILILVTVAGNVVVCLAVG) form a helical membrane-spanning segment. At 45–57 (LNRRLRSLTNCFI) the chain is on the cytoplasmic side. The helical transmembrane segment at 58–81 (VSLAVTDLLLGLLVLPFSAIYQLS) threads the bilayer. Residues 82-92 (CKWSFSKVFCN) lie on the Extracellular side of the membrane. Cys-91 and Cys-174 are joined by a disulfide. Residues 93 to 114 (IYTSLDVMLCTASILNLFMISL) traverse the membrane as a helical segment. Over 115-134 (DRYCAVTDPLRYPVLITPAR) the chain is Cytoplasmic. Residues 135–159 (VAISLVFIWVISITLSFLSIHLGWN) form a helical membrane-spanning segment. Over 160–180 (SRNETSKDNDTIVKCKVQVNE) the chain is Extracellular. A helical transmembrane segment spans residues 181–204 (VYGLVDGLVTFYLPLLIMCITYFR). The Cytoplasmic portion of the chain corresponds to 205 to 234 (IFKIAREQARRINHIGSWKAATIREHKATV). Residues 235 to 258 (TLAAVMGAFIICWFPYFTVFVYRG) traverse the membrane as a helical segment. Over 259–267 (LKGDDAVNE) the chain is Extracellular. Residues 268–289 (VFEDVVLWLGYANSALNPILYA) form a helical membrane-spanning segment. The Cytoplasmic segment spans residues 290-359 (ALNRDFRTAY…VTAPQGATNR (70 aa)). Cys-305 carries S-palmitoyl cysteine lipidation.

The protein belongs to the G-protein coupled receptor 1 family.

Its subcellular location is the cell membrane. Functionally, the H2 subclass of histamine receptors mediates gastric acid secretion. The activity of this receptor is mediated by G proteins which activate adenylyl cyclase. The chain is Histamine H2 receptor (HRH2) from Cavia porcellus (Guinea pig).